The following is a 229-amino-acid chain: 3-isopropylmalate dehydratase small subunit (229 aa).

The segment at 198 to 229 is disordered; the sequence is LPVKREPEQPIESAREGEYPDWQGPLADRGII. Over residues 200–215 the composition is skewed to basic and acidic residues; sequence VKREPEQPIESAREGE.

This sequence belongs to the LeuD family. LeuD type 1 subfamily. Heterodimer of LeuC and LeuD.

It carries out the reaction (2R,3S)-3-isopropylmalate = (2S)-2-isopropylmalate. It participates in amino-acid biosynthesis; L-leucine biosynthesis; L-leucine from 3-methyl-2-oxobutanoate: step 2/4. Its function is as follows. Catalyzes the isomerization between 2-isopropylmalate and 3-isopropylmalate, via the formation of 2-isopropylmaleate. The sequence is that of 3-isopropylmalate dehydratase small subunit from Bifidobacterium adolescentis (strain ATCC 15703 / DSM 20083 / NCTC 11814 / E194a).